The sequence spans 62 residues: DNA gyrase inhibitor YacG (62 aa).

4 residues coordinate Zn(2+): C9, C12, C27, and C31. Over residues 43-53 (GYRIPGEKAPE) the composition is skewed to basic and acidic residues. The interval 43 to 62 (GYRIPGEKAPESGDEEPGDE) is disordered.

Belongs to the DNA gyrase inhibitor YacG family. Interacts with GyrB. The cofactor is Zn(2+).

In terms of biological role, inhibits all the catalytic activities of DNA gyrase by preventing its interaction with DNA. Acts by binding directly to the C-terminal domain of GyrB, which probably disrupts DNA binding by the gyrase. The polypeptide is DNA gyrase inhibitor YacG (Citrifermentans bemidjiense (strain ATCC BAA-1014 / DSM 16622 / JCM 12645 / Bem) (Geobacter bemidjiensis)).